Consider the following 382-residue polypeptide: Mannitol-1-phosphate 5-dehydrogenase (382 aa).

NAD(+) is bound at residue 3 to 14; the sequence is ALHFGAGNIGRG. Lys269 carries the post-translational modification N6-acetyllysine.

This sequence belongs to the mannitol dehydrogenase family. In terms of assembly, monomer.

The enzyme catalyses D-mannitol 1-phosphate + NAD(+) = beta-D-fructose 6-phosphate + NADH + H(+). The protein is Mannitol-1-phosphate 5-dehydrogenase of Escherichia coli O157:H7.